The sequence spans 505 residues: L-carnitine/gamma-butyrobetaine antiporter (505 aa).

The next 12 membrane-spanning stretches (helical) occupy residues 10 to 30 (IEPKVFFPPLIIVGILCWLTV), 51 to 71 (WGWAFEWYMIVMLFGWFWLVF), 92 to 112 (IFMMFASCTSAAVLFWGSIEI), 143 to 163 (GPLPWATYSFLSVAFAYFFFV), 195 to 215 (FYLVALIFAMGTSLGLATPLV), 231 to 251 (LDAIIITCWIILNAICVACGL), 263 to 283 (SYLSFLMLGWVFIVSGASFIM), 316 to 336 (WTVFYWAWWVIYAIQMSIFLA), 347 to 367 (LCFGMVMGLTASTWILWTVLG), 403 to 423 (LSTATMWGFFILCFIATVTLI), 446 to 466 (LLVRIGWSVLVGIIGIVLLAL), and 475 to 495 (AIIAGGCPLFFVNIMVTLSFI).

The protein belongs to the BCCT transporter (TC 2.A.15) family. CaiT subfamily. As to quaternary structure, homotrimer.

The protein localises to the cell inner membrane. The catalysed reaction is 4-(trimethylamino)butanoate(in) + (R)-carnitine(out) = 4-(trimethylamino)butanoate(out) + (R)-carnitine(in). It functions in the pathway amine and polyamine metabolism; carnitine metabolism. In terms of biological role, catalyzes the exchange of L-carnitine for gamma-butyrobetaine. This is L-carnitine/gamma-butyrobetaine antiporter from Salmonella gallinarum (strain 287/91 / NCTC 13346).